Here is a 180-residue protein sequence, read N- to C-terminus: ATP-dependent protease subunit HslV (180 aa).

The active site involves Thr8. Na(+) contacts are provided by Gly165, Cys168, and Thr171.

The protein belongs to the peptidase T1B family. HslV subfamily. A double ring-shaped homohexamer of HslV is capped on each side by a ring-shaped HslU homohexamer. The assembly of the HslU/HslV complex is dependent on binding of ATP.

The protein localises to the cytoplasm. It catalyses the reaction ATP-dependent cleavage of peptide bonds with broad specificity.. With respect to regulation, allosterically activated by HslU binding. Protease subunit of a proteasome-like degradation complex believed to be a general protein degrading machinery. The sequence is that of ATP-dependent protease subunit HslV from Halalkalibacterium halodurans (strain ATCC BAA-125 / DSM 18197 / FERM 7344 / JCM 9153 / C-125) (Bacillus halodurans).